Reading from the N-terminus, the 353-residue chain is Soluble interferon alpha/beta receptor OPG204 (353 aa).

The signal sequence occupies residues 1-21 (MTMKMMVHIYFVSLSLLLLLF). 2 Ig-like C2-type domains span residues 67 to 139 (LGEP…KNGD) and 157 to 239 (PKTY…IVVS). 2 cysteine pairs are disulfide-bonded: Cys-75–Cys-131 and Cys-174–Cys-223. N-linked (GlcNAc...) asparagine; by host glycans are attached at residues Asn-119, Asn-184, Asn-263, Asn-271, and Asn-323. An Ig-like V-type domain is found at 248-347 (PSQDHRFKLI…HNYYFEKTLT (100 aa)). A disulfide bridge links Cys-274 with Cys-335.

Belongs to the interleukin-1 receptor family. As to quaternary structure, interacts with host IFNA1.

It localises to the secreted. Its function is as follows. Counteracts the antiviral effects of host IFN-alpha/beta and key IFN-inducible proteins involved in viral RNA degradation suxh as host OAS1. Acts as a soluble IFN-alpha receptor and thus inhibits the interaction between host IFN-alpha and its receptor. This chain is Soluble interferon alpha/beta receptor OPG204 (OPG204), found in Homo sapiens (Human).